The sequence spans 369 residues: tRNA/tmRNA (uracil-C(5))-methyltransferase (369 aa).

Positions 190, 218, 223, 239, and 301 each coordinate S-adenosyl-L-methionine. The active-site Nucleophile is the cysteine 326. Glutamate 360 functions as the Proton acceptor in the catalytic mechanism.

It belongs to the class I-like SAM-binding methyltransferase superfamily. RNA M5U methyltransferase family. TrmA subfamily.

The enzyme catalyses uridine(54) in tRNA + S-adenosyl-L-methionine = 5-methyluridine(54) in tRNA + S-adenosyl-L-homocysteine + H(+). It carries out the reaction uridine(341) in tmRNA + S-adenosyl-L-methionine = 5-methyluridine(341) in tmRNA + S-adenosyl-L-homocysteine + H(+). Its function is as follows. Dual-specificity methyltransferase that catalyzes the formation of 5-methyluridine at position 54 (m5U54) in all tRNAs, and that of position 341 (m5U341) in tmRNA (transfer-mRNA). The polypeptide is tRNA/tmRNA (uracil-C(5))-methyltransferase (Vibrio atlanticus (strain LGP32) (Vibrio splendidus (strain Mel32))).